The primary structure comprises 380 residues: Two-component response regulator ORR28 (380 aa).

The region spanning 13–130 is the Response regulatory domain; sequence SAMVIDEDKC…TIQNLWQHLD (118 aa). Asp-65 carries the 4-aspartylphosphate modification. Residues 169–223 constitute a DNA-binding region (myb-like GARP); the sequence is RKYYLMWTPHLQKKFLHALEILGEGQISLMIMDVDNIDRKQISTHLQKHRLQLKK. The interval 225-245 is disordered; that stretch reads LSKASFTKGSNEDTSNPSAKN. The span at 228-245 shows a compositional bias: polar residues; it reads ASFTKGSNEDTSNPSAKN.

The protein belongs to the ARR family. Type-B subfamily. Two-component system major event consists of a His-to-Asp phosphorelay between a sensor histidine kinase (HK) and a response regulator (RR). In plants, the His-to-Asp phosphorelay involves an additional intermediate named Histidine-containing phosphotransfer protein (HPt). This multistep phosphorelay consists of a His-Asp-His-Asp sequential transfer of a phosphate group between first a His and an Asp of the HK protein, followed by the transfer to a conserved His of the HPt protein and finally the transfer to an Asp in the receiver domain of the RR protein.

The protein resides in the nucleus. Its function is as follows. Transcriptional activator that binds specific DNA sequence. Functions as a response regulator involved in His-to-Asp phosphorelay signal transduction system. Phosphorylation of the Asp residue in the receiver domain activates the ability of the protein to promote the transcription of target genes. May directly activate some type-A response regulators in response to cytokinins. This chain is Two-component response regulator ORR28, found in Oryza sativa subsp. indica (Rice).